The sequence spans 192 residues: MSSKEQKTPNEQVSEEMENTAEQQVEATQETGECVDPRVAELEVQLSDALQRERESLLRAKAEVENIRRRTELDVEKAHKFALERFSSELLPVIDNLERALDTADKTNTELTSMIEGVELTLKSLLDAVGKFGIEVVGETHVPFNPEVHQAMTMLESADHEPNHVMMVMQKGYTLNGRLLRPAMVAVSKAKS.

Positions 1–34 (MSSKEQKTPNEQVSEEMENTAEQQVEATQETGEC) are disordered. A compositionally biased stretch (polar residues) spans 20–31 (TAEQQVEATQET).

Belongs to the GrpE family. As to quaternary structure, homodimer.

It is found in the cytoplasm. Participates actively in the response to hyperosmotic and heat shock by preventing the aggregation of stress-denatured proteins, in association with DnaK and GrpE. It is the nucleotide exchange factor for DnaK and may function as a thermosensor. Unfolded proteins bind initially to DnaJ; upon interaction with the DnaJ-bound protein, DnaK hydrolyzes its bound ATP, resulting in the formation of a stable complex. GrpE releases ADP from DnaK; ATP binding to DnaK triggers the release of the substrate protein, thus completing the reaction cycle. Several rounds of ATP-dependent interactions between DnaJ, DnaK and GrpE are required for fully efficient folding. The polypeptide is Protein GrpE (Yersinia pseudotuberculosis serotype I (strain IP32953)).